The primary structure comprises 436 residues: Trigger factor (436 aa).

Residues 161–246 (EDQLNIDFVG…VNTVSEPKLP (86 aa)) form the PPIase FKBP-type domain.

This sequence belongs to the FKBP-type PPIase family. Tig subfamily.

It localises to the cytoplasm. The enzyme catalyses [protein]-peptidylproline (omega=180) = [protein]-peptidylproline (omega=0). In terms of biological role, involved in protein export. Acts as a chaperone by maintaining the newly synthesized protein in an open conformation. Functions as a peptidyl-prolyl cis-trans isomerase. This is Trigger factor from Pseudomonas savastanoi pv. phaseolicola (strain 1448A / Race 6) (Pseudomonas syringae pv. phaseolicola (strain 1448A / Race 6)).